We begin with the raw amino-acid sequence, 554 residues long: Carboxypeptidase Y homolog A (554 aa).

An N-terminal signal peptide occupies residues 1–17 (MRIAASTVLFGAASAAS). Residues 18 to 137 (FQQQAQHVLS…RLEEYNLRVK (120 aa)) constitute a propeptide that is removed on maturation. Intrachain disulfides connect Cys191–Cys431, Cys325–Cys339, Cys349–Cys372, Cys356–Cys365, and Cys394–Cys401. Asn222 is a glycosylation site (N-linked (GlcNAc...) asparagine). The active site involves Ser278. Asp470 is an active-site residue. An N-linked (GlcNAc...) asparagine glycan is attached at Asn518. His529 is a catalytic residue.

Belongs to the peptidase S10 family.

Its subcellular location is the vacuole. It catalyses the reaction Release of a C-terminal amino acid with broad specificity.. In terms of biological role, vacuolar carboxypeptidase involved in degradation of small peptides. Digests preferentially peptides containing an aliphatic or hydrophobic residue in P1' position, as well as methionine, leucine or phenylalanine in P1 position of ester substrate. The chain is Carboxypeptidase Y homolog A (CPYA) from Chaetomium globosum (strain ATCC 6205 / CBS 148.51 / DSM 1962 / NBRC 6347 / NRRL 1970) (Soil fungus).